A 405-amino-acid polypeptide reads, in one-letter code: Multifunctional CCA protein (405 aa).

Positions 8 and 11 each coordinate ATP. CTP-binding residues include glycine 8 and arginine 11. Mg(2+) is bound by residues aspartate 21 and aspartate 23. Arginine 91, arginine 137, and arginine 140 together coordinate ATP. CTP-binding residues include arginine 91, arginine 137, and arginine 140. The HD domain maps to 228–329 (TGIHSMMVLE…NDFLDKCDVW (102 aa)).

This sequence belongs to the tRNA nucleotidyltransferase/poly(A) polymerase family. Bacterial CCA-adding enzyme type 1 subfamily. As to quaternary structure, monomer. Can also form homodimers and oligomers. Requires Mg(2+) as cofactor. The cofactor is Ni(2+).

The catalysed reaction is a tRNA precursor + 2 CTP + ATP = a tRNA with a 3' CCA end + 3 diphosphate. It carries out the reaction a tRNA with a 3' CCA end + 2 CTP + ATP = a tRNA with a 3' CCACCA end + 3 diphosphate. Its function is as follows. Catalyzes the addition and repair of the essential 3'-terminal CCA sequence in tRNAs without using a nucleic acid template. Adds these three nucleotides in the order of C, C, and A to the tRNA nucleotide-73, using CTP and ATP as substrates and producing inorganic pyrophosphate. tRNA 3'-terminal CCA addition is required both for tRNA processing and repair. Also involved in tRNA surveillance by mediating tandem CCA addition to generate a CCACCA at the 3' terminus of unstable tRNAs. While stable tRNAs receive only 3'-terminal CCA, unstable tRNAs are marked with CCACCA and rapidly degraded. The sequence is that of Multifunctional CCA protein from Pseudoalteromonas atlantica (strain T6c / ATCC BAA-1087).